Reading from the N-terminus, the 366-residue chain is Putative ankyrin repeat protein RBE_0601 (366 aa).

ANK repeat units lie at residues 39–68 (KHGT…DINE), 94–124 (LPDE…DVNT), 131–160 (HGGA…IASQ), 162–186 (VISA…TAHD), 210–239 (KSSN…NPNA), and 250–280 (IALS…DTSK).

The sequence is that of Putative ankyrin repeat protein RBE_0601 from Rickettsia bellii (strain RML369-C).